The following is a 900-amino-acid chain: Alanine--tRNA ligase (900 aa).

Zn(2+)-binding residues include H580, H584, C683, and H687.

The protein belongs to the class-II aminoacyl-tRNA synthetase family. It depends on Zn(2+) as a cofactor.

It is found in the cytoplasm. It carries out the reaction tRNA(Ala) + L-alanine + ATP = L-alanyl-tRNA(Ala) + AMP + diphosphate. In terms of biological role, catalyzes the attachment of alanine to tRNA(Ala) in a two-step reaction: alanine is first activated by ATP to form Ala-AMP and then transferred to the acceptor end of tRNA(Ala). Also edits incorrectly charged Ser-tRNA(Ala) and Gly-tRNA(Ala) via its editing domain. The polypeptide is Alanine--tRNA ligase (Mycolicibacterium paratuberculosis (strain ATCC BAA-968 / K-10) (Mycobacterium paratuberculosis)).